The primary structure comprises 145 residues: DNA polymerase epsilon subunit 3 (145 aa).

Residue alanine 2 is modified to N-acetylalanine. Threonine 83 bears the Phosphothreonine mark. Residues 85–144 (LKEALEAYRREQKGKKEASEQKKKDKDKKDCEEQDKSREEEDEDEERLDEEEQNEEEEVD) adopt a coiled-coil conformation. Positions 93 to 123 (RREQKGKKEASEQKKKDKDKKDCEEQDKSRE) are enriched in basic and acidic residues. The disordered stretch occupies residues 93-145 (RREQKGKKEASEQKKKDKDKKDCEEQDKSREEEDEDEERLDEEEQNEEEEVDN). Serine 121 carries the post-translational modification Phosphoserine. The span at 124–145 (EEDEDEERLDEEEQNEEEEVDN) shows a compositional bias: acidic residues.

Component of the DNA polymerase epsilon complex consisting of four subunits: the catalytic subunit POLE and the accessory subunits POLE2, POLE3 and POLE4. Interaction with POLE4 is a prerequisite for further binding with POLE and POLE2. Heterodimer with CHRAC1; binds to DNA. Component of the CHRAC ISWI chromatin remodeling complex at least composed of SMARCA5/SNF2H, BAZ1A/ACF1, CHRAC1 and POLE3; the complex preferentially binds DNA through the CHRAC1-POLE3 heterodimer and possesses ATP-dependent nucleosome-remodeling activity. Within the complex, the heterodimer with CHRAC1 interacts with SMARCA5/SNF2H; the interaction is direct and enhances nucleosome sliding activity by the SMARCA5/SNF2H and BAZ1A/ACF1 interaction. Within the complex, the heterodimer with CHRAC1 interacts with BAZ1A/ACF1; the interactions are direct.

The protein resides in the nucleus. In terms of biological role, accessory component of the DNA polymerase epsilon complex. Participates in DNA repair and in chromosomal DNA replication. Forms a complex with CHRAC1 and binds naked DNA, which is then incorporated into chromatin, aided by the nucleosome-remodeling activity of ISWI/SNF2H and ACF1. Does not enhance nucleosome sliding activity of the ACF-5 ISWI chromatin remodeling complex. This Rattus norvegicus (Rat) protein is DNA polymerase epsilon subunit 3 (Pole3).